A 485-amino-acid chain; its full sequence is NGFI-A-binding protein 1 (485 aa).

Positions 4 to 82 (ALPRTLGELQ…RDWVTNPGLF (79 aa)) are NCD1. Residues Lys126, Lys129, and Lys143 each participate in a glycyl lysine isopeptide (Lys-Gly) (interchain with G-Cter in SUMO2) cross-link. Residues 160 to 187 (WQGHHATESEHSLSPADVGSPASPKESS) form a disordered region. Ser171 and Ser182 each carry phosphoserine. A Glycyl lysine isopeptide (Lys-Gly) (interchain with G-Cter in SUMO2) cross-link involves residue Lys211. The tract at residues 220–309 (LLKNNKKLAK…ARQVSREVTY (90 aa)) is NCD2. The segment at 306 to 337 (EVTYKYTYRTTRLKCGERDELSPKRIKVEDGF) is necessary for nuclear localization. Residue Ser327 is modified to Phosphoserine. A Glycyl lysine isopeptide (Lys-Gly) (interchain with G-Cter in SUMO1); alternate cross-link involves residue Lys332. Lys332 participates in a covalent cross-link: Glycyl lysine isopeptide (Lys-Gly) (interchain with G-Cter in SUMO2); alternate. Residues Lys354, Lys368, and Lys372 each participate in a glycyl lysine isopeptide (Lys-Gly) (interchain with G-Cter in SUMO2) cross-link. A disordered region spans residues 398–432 (RQSSGEHSPDGLPSDGSDGQGERPLNLRMPNVQNR). At Ser405 the chain carries Phosphoserine. Residues Lys452, Lys463, and Lys475 each participate in a glycyl lysine isopeptide (Lys-Gly) (interchain with G-Cter in SUMO2) cross-link. Lys478 participates in a covalent cross-link: Glycyl lysine isopeptide (Lys-Gly) (interchain with G-Cter in SUMO1); alternate. A Glycyl lysine isopeptide (Lys-Gly) (interchain with G-Cter in SUMO2); alternate cross-link involves residue Lys478.

Belongs to the NAB family. In terms of assembly, homomultimers may associate with EGR1 bound to DNA.

Its subcellular location is the nucleus. In terms of biological role, acts as a transcriptional repressor for zinc finger transcription factors EGR1 and EGR2. The protein is NGFI-A-binding protein 1 (NAB1) of Mesocricetus auratus (Golden hamster).